The chain runs to 227 residues: Cytochrome c oxidase subunit 2 (227 aa).

Topologically, residues 1–14 (MAYPFQLGLQDATS) are mitochondrial intermembrane. The chain crosses the membrane as a helical span at residues 15–45 (PIMEELMNFHDHTLMIVFLISSLVLYIISLM). Topologically, residues 46–59 (LTTKLTHTSTMDAQ) are mitochondrial matrix. Residues 60-87 (EVETIWTILPAAILILIALPSLRILYMM) traverse the membrane as a helical segment. Residues 88-227 (DEINNPVLTV…YFENWSASMI (140 aa)) lie on the Mitochondrial intermembrane side of the membrane. 6 residues coordinate Cu cation: histidine 161, cysteine 196, glutamate 198, cysteine 200, histidine 204, and methionine 207. Mg(2+) is bound at residue glutamate 198.

This sequence belongs to the cytochrome c oxidase subunit 2 family. As to quaternary structure, component of the cytochrome c oxidase (complex IV, CIV), a multisubunit enzyme composed of 14 subunits. The complex is composed of a catalytic core of 3 subunits MT-CO1, MT-CO2 and MT-CO3, encoded in the mitochondrial DNA, and 11 supernumerary subunits COX4I, COX5A, COX5B, COX6A, COX6B, COX6C, COX7A, COX7B, COX7C, COX8 and NDUFA4, which are encoded in the nuclear genome. The complex exists as a monomer or a dimer and forms supercomplexes (SCs) in the inner mitochondrial membrane with NADH-ubiquinone oxidoreductase (complex I, CI) and ubiquinol-cytochrome c oxidoreductase (cytochrome b-c1 complex, complex III, CIII), resulting in different assemblies (supercomplex SCI(1)III(2)IV(1) and megacomplex MCI(2)III(2)IV(2)). Found in a complex with TMEM177, COA6, COX18, COX20, SCO1 and SCO2. Interacts with TMEM177 in a COX20-dependent manner. Interacts with COX20. Interacts with COX16. The cofactor is Cu cation.

The protein localises to the mitochondrion inner membrane. The catalysed reaction is 4 Fe(II)-[cytochrome c] + O2 + 8 H(+)(in) = 4 Fe(III)-[cytochrome c] + 2 H2O + 4 H(+)(out). Component of the cytochrome c oxidase, the last enzyme in the mitochondrial electron transport chain which drives oxidative phosphorylation. The respiratory chain contains 3 multisubunit complexes succinate dehydrogenase (complex II, CII), ubiquinol-cytochrome c oxidoreductase (cytochrome b-c1 complex, complex III, CIII) and cytochrome c oxidase (complex IV, CIV), that cooperate to transfer electrons derived from NADH and succinate to molecular oxygen, creating an electrochemical gradient over the inner membrane that drives transmembrane transport and the ATP synthase. Cytochrome c oxidase is the component of the respiratory chain that catalyzes the reduction of oxygen to water. Electrons originating from reduced cytochrome c in the intermembrane space (IMS) are transferred via the dinuclear copper A center (CU(A)) of subunit 2 and heme A of subunit 1 to the active site in subunit 1, a binuclear center (BNC) formed by heme A3 and copper B (CU(B)). The BNC reduces molecular oxygen to 2 water molecules using 4 electrons from cytochrome c in the IMS and 4 protons from the mitochondrial matrix. The sequence is that of Cytochrome c oxidase subunit 2 (MT-CO2) from Leggadina forresti (Forrest's mouse).